The sequence spans 708 residues: Prolyl 3-hydroxylase 2 (708 aa).

The N-terminal stretch at 1 to 24 (MRERIWAPPLLLLLPLLLPPPLWG) is a signal peptide. TPR repeat units follow at residues 44–77 (FDLLYASGAAAYYSGDYERAVRDLEAALRSHRRL), 148–181 (RVPYNYLQRAYIKLNQLEKAVEAAHTFFVANPEH), 210–243 (HMESYNAGVKHYEADDFEMAIRHFEQALREYFVE), and 306–339 (PLHYDYLQFAYYRVGEYVKALECAKAYLLCHPDD). 2 N-linked (GlcNAc...) asparagine glycosylation sites follow: Asn449 and Asn549. The Fe2OG dioxygenase domain maps to 557–671 (THMVCRTALS…RCAVALWFTL (115 aa)). Fe cation-binding residues include His580, Asp582, and His652. Arg662 is an active-site residue. Positions 705–708 (KDEL) match the Prevents secretion from ER motif.

This sequence belongs to the leprecan family. It depends on Fe cation as a cofactor. L-ascorbate serves as cofactor. In terms of tissue distribution, expression localized to the epithelia of bile ducts and to the sacroplasm of heart muscle and skeletal muscle. In the pancreas, localized to a subpopulation of Langerhans islet cells and in the salivary gland, expressed in acinar cells (at protein level). Expressed in adult heart, placenta, lung, liver, skeletal muscle and kidney. Detected in fetal heart, spleen, lung, liver skeletal muscle and kidney.

It is found in the endoplasmic reticulum. Its subcellular location is the sarcoplasmic reticulum. It localises to the golgi apparatus. The catalysed reaction is L-prolyl-[collagen] + 2-oxoglutarate + O2 = trans-3-hydroxy-L-prolyl-[collagen] + succinate + CO2. Its activity is regulated as follows. Inhibited by pyridine 2,4-dicarboxylate, an analog of 2-oxoglutarate. Its function is as follows. Prolyl 3-hydroxylase that catalyzes the post-translational formation of 3-hydroxyproline on collagens. Contributes to proline 3-hydroxylation of collagen COL4A1 and COL1A1 in tendons, the eye sclera and in the eye lens capsule. Has high activity with the type IV collagen COL4A1, and lower activity with COL1A1. Catalyzes hydroxylation of the first Pro in Gly-Pro-Hyp sequences where Hyp is 4-hydroxyproline. Has no activity on substrates that lack 4-hydroxyproline in the third position. This Homo sapiens (Human) protein is Prolyl 3-hydroxylase 2.